Consider the following 557-residue polypeptide: E3 ubiquitin-protein ligase rnf168 (557 aa).

The RING-type zinc-finger motif lies at 16–55; that stretch reads CPICQEILLEPVTLPCKHTLCNPCFQMTVEKASLCCPFCR. Residues 112-130 carry the LR motif 1 motif; the sequence is LCQPGEIRQEYEAEVSKIE. A UMI motif motif is present at residues 145-153; it reads EDYIQKLLA. 2 consecutive short sequence motifs (MIU motif) follow at residues 170 to 193 and 422 to 445; these read MEEQ…VSNA and RRRQ…KELK. Positions 449–460 match the LR motif 2 motif; sequence RGKGSPDEYELR. Residues 482–543 are disordered; the sequence is PLRKEIPVQD…GINVLKPINK (62 aa). Polar residues predominate over residues 490–500; that stretch reads QDNSRNTQSEY. The segment covering 508 to 521 has biased composition (basic residues); that stretch reads PSRKNSVRSARVRQ.

Belongs to the RNF168 family. As to quaternary structure, monomer.

The protein localises to the nucleus. It carries out the reaction S-ubiquitinyl-[E2 ubiquitin-conjugating enzyme]-L-cysteine + [acceptor protein]-L-lysine = [E2 ubiquitin-conjugating enzyme]-L-cysteine + N(6)-ubiquitinyl-[acceptor protein]-L-lysine.. The protein operates within protein modification; protein ubiquitination. Its function is as follows. E3 ubiquitin-protein ligase required for accumulation of repair proteins to sites of DNA damage. Acts with ube2n/ubc13 to amplify the rnf8-dependent histone ubiquitination. Recruited to sites of DNA damage at double-strand breaks (DSBs) by binding to ubiquitinated histone H2A and ubiquitinates histone H2A and H2AX, leading to amplify the rnf8-dependent H2A ubiquitination and promoting the formation of 'Lys-63'-linked ubiquitin conjugates. This leads to concentrate ubiquitinated histones H2A and H2AX at DNA lesions to the threshold required for recruitment of tp53bp1 and brca1. Catalyzes monoubiquitination of 'Lys-13' and 'Lys-15' of nucleosomal histone H2A (H2AK13Ub and H2AK15Ub, respectively). The sequence is that of E3 ubiquitin-protein ligase rnf168 from Xenopus laevis (African clawed frog).